The following is a 95-amino-acid chain: Co-chaperonin GroES (95 aa).

It belongs to the GroES chaperonin family. As to quaternary structure, heptamer of 7 subunits arranged in a ring. Interacts with the chaperonin GroEL.

The protein localises to the cytoplasm. Functionally, together with the chaperonin GroEL, plays an essential role in assisting protein folding. The GroEL-GroES system forms a nano-cage that allows encapsulation of the non-native substrate proteins and provides a physical environment optimized to promote and accelerate protein folding. GroES binds to the apical surface of the GroEL ring, thereby capping the opening of the GroEL channel. The protein is Co-chaperonin GroES of Streptococcus uberis (strain ATCC BAA-854 / 0140J).